Here is a 596-residue protein sequence, read N- to C-terminus: Cell adhesion molecule CEACAM20 (596 aa).

Residues M1–A30 form the signal peptide. The Extracellular portion of the chain corresponds to Q31–G450. 4 consecutive Ig-like C2-type domains span residues P58–L154, P160–K246, P256–T341, and P346–L432. Residues C90 and C138 are joined by a disulfide bond. N-linked (GlcNAc...) asparagine glycans are attached at residues N96 and N105. C276 and C324 form a disulfide bridge. N-linked (GlcNAc...) asparagine glycans are attached at residues N280, N306, N317, N368, and N415. C375 and C416 are joined by a disulfide. A helical membrane pass occupies residues I451 to I471. Residues R472 to E585 are Cytoplasmic-facing. Disordered stretches follow at residues P477–E510 and Q527–P563. A compositionally biased stretch (low complexity) spans E501–E510. Positions W553–P562 are enriched in pro residues. Residues Y578 and Y589 each carry the phosphotyrosine modification.

This sequence belongs to the immunoglobulin superfamily. CEA family. In terms of assembly, interacts (via extracellular domain) with PTPRH (via extracellular domain); the interaction dephosphorylates CEACAM20. Interacts (phosphorylated form) with SYK (via SH2 domains); the interaction further enhances CEACAM20 phosphorylation. In terms of processing, phosphorylated on tyrosine residues by SYK, SRC and FYN in vitro.

The protein resides in the cell projection. The protein localises to the microvillus membrane. It is found in the apical cell membrane. Its function is as follows. Together with the tyrosine-protein kinase SYK, enhances production of the cytokine CXCL8/IL-8 via the NFKB pathway and may thus have a role in the intestinal immune response. This is Cell adhesion molecule CEACAM20 from Homo sapiens (Human).